The chain runs to 295 residues: Glycine N-methyltransferase (295 aa).

Val2 is subject to N-acetylvaline. (6S)-5-methyl-5,6,7,8-tetrahydrofolate is bound by residues Ser4 and Tyr6. Ser10 is subject to Phosphoserine. Residues Tyr22, Trp31, Tyr34, and Arg41 each coordinate S-adenosyl-L-methionine. Phosphotyrosine is present on Tyr34. Lys46 bears the N6-succinyllysine mark. Residues Ala65, 86 to 88, 117 to 118, 139 to 142, and Arg178 contribute to the S-adenosyl-L-methionine site; these read DAS, NW, and LGNS. N6-succinyllysine is present on residues Lys193, Lys198, and Lys203. (6S)-5-methyl-5,6,7,8-tetrahydrofolate is bound at residue His217. Tyr223 serves as a coordination point for S-adenosyl-L-methionine. Arg242 contacts (6S)-5-methyl-5,6,7,8-tetrahydrofolate.

This sequence belongs to the class I-like SAM-binding methyltransferase superfamily. Glycine N-methyltransferase family. In terms of assembly, homotetramer. Expressed only in liver, pancreas, and prostate.

It localises to the cytoplasm. The catalysed reaction is glycine + S-adenosyl-L-methionine = sarcosine + S-adenosyl-L-homocysteine + H(+). With respect to regulation, inhibited by 5-methyltetrahydrofolate monoglutamate and by 5-methyltetrahydrofolate pentaglutamate, inhibition is much more effective by the pentaglutamate form than by the monoglutamate form. Two molecules of 5-methyltetrahydrofolate are bound per tetramer. The binding sites are localized between subunits. Inhibitor binding may preclude movements of the polypeptide chain that are necessary for enzyme activity. In terms of biological role, catalyzes the methylation of glycine by using S-adenosylmethionine (AdoMet) to form N-methylglycine (sarcosine) with the concomitant production of S-adenosylhomocysteine (AdoHcy), a reaction regulated by the binding of 5-methyltetrahydrofolate. Plays an important role in the regulation of methyl group metabolism by regulating the ratio between S-adenosyl-L-methionine and S-adenosyl-L-homocysteine. In Homo sapiens (Human), this protein is Glycine N-methyltransferase.